The chain runs to 585 residues: BURP domain-containing protein 17 (585 aa).

A signal peptide spans 1–20 (MDRIFARFFCFLLIAAVSHA). A disordered region spans residues 63–82 (GQRNYKSSVSHVAERSHRVD). The region spanning 363–584 (FFLEKNLQQG…QPDAVVWTRR (222 aa)) is the BURP domain.

Expressed in leaves.

In Oryza sativa subsp. japonica (Rice), this protein is BURP domain-containing protein 17 (BURP17).